Here is a 602-residue protein sequence, read N- to C-terminus: Elongation factor 4 (602 aa).

Residues 8–189 (KNIRNFSIIA…KIITTIPAPS (182 aa)) form the tr-type G domain. GTP is bound by residues 20-25 (DHGKST) and 136-139 (NKID).

Belongs to the TRAFAC class translation factor GTPase superfamily. Classic translation factor GTPase family. LepA subfamily.

It localises to the cell inner membrane. The enzyme catalyses GTP + H2O = GDP + phosphate + H(+). Its function is as follows. Required for accurate and efficient protein synthesis under certain stress conditions. May act as a fidelity factor of the translation reaction, by catalyzing a one-codon backward translocation of tRNAs on improperly translocated ribosomes. Back-translocation proceeds from a post-translocation (POST) complex to a pre-translocation (PRE) complex, thus giving elongation factor G a second chance to translocate the tRNAs correctly. Binds to ribosomes in a GTP-dependent manner. In Helicobacter pylori (strain HPAG1), this protein is Elongation factor 4.